Consider the following 479-residue polypeptide: Ribosomal RNA small subunit methyltransferase F (479 aa).

Residues 125-131 (AAAPGSK), Glu-149, Asp-176, and Asp-194 each bind S-adenosyl-L-methionine. Cys-247 (nucleophile) is an active-site residue.

It belongs to the class I-like SAM-binding methyltransferase superfamily. RsmB/NOP family.

It is found in the cytoplasm. It catalyses the reaction cytidine(1407) in 16S rRNA + S-adenosyl-L-methionine = 5-methylcytidine(1407) in 16S rRNA + S-adenosyl-L-homocysteine + H(+). Its function is as follows. Specifically methylates the cytosine at position 1407 (m5C1407) of 16S rRNA. This is Ribosomal RNA small subunit methyltransferase F from Shigella dysenteriae serotype 1 (strain Sd197).